We begin with the raw amino-acid sequence, 388 residues long: Pepsin A-1 (388 aa).

An N-terminal signal peptide occupies residues 1–15 (MKWLLLLGLVALSEC). 2 propeptides (activation peptide) span residues 16 to 40 (IIYK…LLKD) and 41 to 62 (FLKK…APTL). Residues 76 to 385 (YFGTIGIGTP…DRANNQVGLA (310 aa)) enclose the Peptidase A1 domain. Asp94 is an active-site residue. The cysteines at positions 107 and 112 are disulfide-linked. The residue at position 130 (Ser130) is a Phosphoserine. An intrachain disulfide couples Cys268 to Cys272. Asp277 is a catalytic residue. Cys311 and Cys344 are oxidised to a cystine.

It belongs to the peptidase A1 family. In terms of processing, each pepsinogen is converted to corresponding pepsin at pH 2.0 in part as a result of the release of a 47 AA activation segment and in part as a result of stepwise proteolytic cleavage via an intermediate form(s).

It localises to the secreted. The enzyme catalyses Preferential cleavage: hydrophobic, preferably aromatic, residues in P1 and P1' positions. Cleaves 1-Phe-|-Val-2, 4-Gln-|-His-5, 13-Glu-|-Ala-14, 14-Ala-|-Leu-15, 15-Leu-|-Tyr-16, 16-Tyr-|-Leu-17, 23-Gly-|-Phe-24, 24-Phe-|-Phe-25 and 25-Phe-|-Tyr-26 bonds in the B chain of insulin.. In terms of biological role, shows particularly broad specificity; although bonds involving phenylalanine and leucine are preferred, many others are also cleaved to some extent. In Macaca fuscata fuscata (Japanese macaque), this protein is Pepsin A-1 (PGA).